Here is a 96-residue protein sequence, read N- to C-terminus: Small cysteine and glycine repeat-containing protein 7 (96 aa).

Residues 4–80 (CGCGSCGGCG…TCGSCGCGCG (77 aa)) are 14 X 2 AA repeats of CG.

It belongs to the KRTAP type 28 family.

Functionally, in the hair cortex, hair keratin intermediate filaments are embedded in an interfilamentous matrix, consisting of hair keratin-associated proteins (KRTAP), which are essential for the formation of a rigid and resistant hair shaft through their extensive disulfide bond cross-linking with abundant cysteine residues of hair keratins. The matrix proteins include the high-sulfur and high-glycine-tyrosine keratins. The protein is Small cysteine and glycine repeat-containing protein 7 of Homo sapiens (Human).